A 525-amino-acid polypeptide reads, in one-letter code: Ankyrin repeat and SOCS box protein 3 (525 aa).

ANK repeat units lie at residues 9-38 (DTCSTVGLAAREGNVKVLRKLLKKGRSIDV), 42-71 (RGWMPIHEASYHNSVECLRMLIRADSSENY), 78-107 (EGFCALHLAASQGHWKIIQILLEAGADPNA), 111-140 (EETTPLFLAVENGQIDVLRLLLRYGANVNG), 145-174 (CGWNALHQASFQGNAEIIKLLLKKGANKEC), 178-207 (FGITPLFVAAQYGKLESLSILISSGADVNC), 211-240 (DKATPLFIAAQEGHTECVELLLSSGADPDL), 246-275 (NWQLPIHAAAQMGHTKILDLLIPLTNRVCD), 279-308 (NKVSPVYSAVLGGHEECLEMLLQSGYSPDA), 315-346 (GFSSPLCMAFQKDCDFFGIVNILLKYGAQLNE), and 348-373 (HLAYCLKYERFSVFRYFLKKCCPSTP). An SOCS box domain is found at 441 to 505 (MLSARASNSS…HDYLLYAEVL (65 aa)).

It belongs to the ankyrin SOCS box (ASB) family. Interacts with ELOB and TNFRSF1B.

Its pathway is protein modification; protein ubiquitination. Probable substrate-recognition component of a SCF-like ECS (Elongin-Cullin-SOCS-box protein) E3 ubiquitin-protein ligase complex which mediates the ubiquitination and subsequent proteasomal degradation of target proteins. Recognizes TNFRSF1B. This chain is Ankyrin repeat and SOCS box protein 3 (ASB3), found in Bos taurus (Bovine).